Reading from the N-terminus, the 255-residue chain is MLPTYERLNDPKNVFFRMPFARLALAALSLPLGGFFFCVVWSLLFDFVRSTYTHCDVVNYLPSVSAAIGNYEPQKTIWRLAIFLHLPLRLAVAKIYLEYYKEHIRRSRRLLGILACFLNVVEDLALFCLSFWTSADSYETHRNAFVVFIACSECYMLMSYLLNRNARKVVLLPHEEKSLRYKRNLFLVNVLAFGLAGYCFVRHNARCEAGVYTFFALFEYIVVLTNMGFHMTSYWDFYALNVVCDAKHGLYLTQF.

6 helical membrane passes run 25–45 (LAAL…SLLF), 80–100 (LAIF…LEYY), 111–131 (LGIL…CLSF), 143–163 (NAFV…YLLN), 185–205 (LFLV…RHNA), and 209–229 (AGVY…NMGF).

This sequence belongs to the PGAP2 family.

It is found in the golgi apparatus membrane. Its subcellular location is the endoplasmic reticulum membrane. Involved in the lipid remodeling steps of GPI-anchor maturation. Required for stable expression of GPI-anchored proteins at the cell surface. This is Post-GPI attachment to proteins factor 2 from Drosophila pseudoobscura pseudoobscura (Fruit fly).